The chain runs to 308 residues: N-acetylgalactosamine kinase AgaK (308 aa).

ATP contacts are provided by residues 4–11 (GLDIGGTK) and 132–139 (GTGGGLCI). Zn(2+)-binding residues include histidine 156, cysteine 174, cysteine 176, and cysteine 181.

This sequence belongs to the ROK (NagC/XylR) family.

It localises to the cytoplasm. It catalyses the reaction N-acetyl-D-galactosamine + ATP = N-acetyl-D-galactosamine 6-phosphate + ADP + H(+). The enzyme catalyses N-acetyl-D-glucosamine + ATP = N-acetyl-D-glucosamine 6-phosphate + ADP + H(+). In terms of biological role, involved in the pathway of N-acetyl-D-galactosamine degradation. Catalyzes the phosphorylation of N-acetyl-D-galactosamine (GalNAc) to yield D-galactosamine 6-phosphate (GalN-6-P). It can also phosphorylate N-acetylglucosamine (GlcNAc). The chain is N-acetylgalactosamine kinase AgaK from Shewanella sp. (strain ANA-3).